We begin with the raw amino-acid sequence, 143 residues long: 3-hydroxyacyl-[acyl-carrier-protein] dehydratase FabZ (143 aa).

Residue histidine 47 is part of the active site.

The protein belongs to the thioester dehydratase family. FabZ subfamily.

The protein localises to the cytoplasm. It carries out the reaction a (3R)-hydroxyacyl-[ACP] = a (2E)-enoyl-[ACP] + H2O. In terms of biological role, involved in unsaturated fatty acids biosynthesis. Catalyzes the dehydration of short chain beta-hydroxyacyl-ACPs and long chain saturated and unsaturated beta-hydroxyacyl-ACPs. The sequence is that of 3-hydroxyacyl-[acyl-carrier-protein] dehydratase FabZ from Rickettsia canadensis (strain McKiel).